The chain runs to 281 residues: Phosphate import ATP-binding protein PstB 1 (281 aa).

Positions 1–34 are disordered; that stretch reads MTENTAETADESSDGGVTATTGAATTTPTTPPEP. The span at 15 to 28 shows a compositional bias: low complexity; sequence GGVTATTGAATTTP. Residues 36–276 form the ABC transporter domain; that stretch reads IRARDLDVFY…PEHQRVEEYI (241 aa). ATP is bound at residue 68 to 75; that stretch reads GPSGCGKS.

Belongs to the ABC transporter superfamily. Phosphate importer (TC 3.A.1.7) family. In terms of assembly, the complex is composed of two ATP-binding proteins (PstB), two transmembrane proteins (PstC and PstA) and a solute-binding protein (PstS).

It localises to the cell membrane. It carries out the reaction phosphate(out) + ATP + H2O = ADP + 2 phosphate(in) + H(+). Part of the ABC transporter complex PstSACB involved in phosphate import. Responsible for energy coupling to the transport system. The polypeptide is Phosphate import ATP-binding protein PstB 1 (Halobacterium salinarum (strain ATCC 700922 / JCM 11081 / NRC-1) (Halobacterium halobium)).